Reading from the N-terminus, the 177-residue chain is ATP synthase subunit delta (177 aa).

Belongs to the ATPase delta chain family. In terms of assembly, F-type ATPases have 2 components, F(1) - the catalytic core - and F(0) - the membrane proton channel. F(1) has five subunits: alpha(3), beta(3), gamma(1), delta(1), epsilon(1). F(0) has three main subunits: a(1), b(2) and c(10-14). The alpha and beta chains form an alternating ring which encloses part of the gamma chain. F(1) is attached to F(0) by a central stalk formed by the gamma and epsilon chains, while a peripheral stalk is formed by the delta and b chains.

It localises to the cell inner membrane. Its function is as follows. F(1)F(0) ATP synthase produces ATP from ADP in the presence of a proton or sodium gradient. F-type ATPases consist of two structural domains, F(1) containing the extramembraneous catalytic core and F(0) containing the membrane proton channel, linked together by a central stalk and a peripheral stalk. During catalysis, ATP synthesis in the catalytic domain of F(1) is coupled via a rotary mechanism of the central stalk subunits to proton translocation. In terms of biological role, this protein is part of the stalk that links CF(0) to CF(1). It either transmits conformational changes from CF(0) to CF(1) or is implicated in proton conduction. The sequence is that of ATP synthase subunit delta from Yersinia pseudotuberculosis serotype O:1b (strain IP 31758).